An 814-amino-acid polypeptide reads, in one-letter code: Echinoderm microtubule-associated protein-like 1 (814 aa).

Residues 31-72 are a coiled coil; it reads SMEISDRIASLEQRVQMQEDDIQLLKSALADVVRRLNITEEQ. The tract at residues 77 to 185 is disordered; the sequence is NRKGPTKARP…EPTFSPEEGY (109 aa). The span at 92–101 shows a compositional bias: polar residues; sequence PLRTTVNNGT. Residues 103–115 show a composition bias toward low complexity; that stretch reads LPKKPSASLPSPS. The residue at position 113 (Ser113) is a Phosphoserine. Residues 127–137 are compositionally biased toward polar residues; it reads KSINRTSSSER. Residues 142–152 are compositionally biased toward basic and acidic residues; it reads GRRESSGDSKG. Residues 155–167 are compositionally biased toward low complexity; sequence NRTGSTSSSSSGK. A tandem atypical propeller in EMLs region spans residues 175–814; the sequence is KEPTFSPEEG…DTSIMQWRVI (640 aa). WD repeat units follow at residues 260 to 309, 314 to 357, 362 to 399, 408 to 445, 449 to 488, 492 to 529, 534 to 571, 577 to 612, 616 to 654, 663 to 700, 708 to 767, and 774 to 813; these read EQLQ…IWDS, TLHV…VWDW, RLAD…FWTL, QGLF…VWGK, RISY…SWNG, KLHK…LQGT, FTPI…LWDA, VWDK…VFDT, DLVT…IYGV, RVGK…YWVP, SVET…LFSY, and APSH…QWRV.

The protein belongs to the WD repeat EMAP family. Homotrimer; self-association is mediated by the N-terminal coiled coil. Does not interact with EML3. Binds repolymerizing microtubules. Binds unpolymerized tubulins via its WD repeat region. Interacts with TASOR.

It localises to the cytoplasm. It is found in the perinuclear region. The protein resides in the cytoskeleton. Modulates the assembly and organization of the microtubule cytoskeleton, and probably plays a role in regulating the orientation of the mitotic spindle and the orientation of the plane of cell division. Required for normal proliferation of neuronal progenitor cells in the developing brain and for normal brain development. Does not affect neuron migration per se. This is Echinoderm microtubule-associated protein-like 1 (Eml1) from Rattus norvegicus (Rat).